We begin with the raw amino-acid sequence, 490 residues long: RNA-binding post-transcriptional regulator cip1 (490 aa).

Disordered regions lie at residues 16 to 63, 76 to 97, and 138 to 199; these read RGLA…GSSA, ASSR…YSQL, and HNVS…GEDT. Polar residues predominate over residues 34–62; sequence RLQSPLNSPKLQPIGSPQASRKTSGSGSS. A phosphoserine mark is found at Ser-37, Ser-41, Ser-49, Ser-86, and Ser-141. 2 stretches are compositionally biased toward low complexity: residues 76–88 and 141–160; these read ASSR…PSDS and SPPS…ASGK. A compositionally biased stretch (polar residues) spans 164–192; that stretch reads ADTSAEPSLDAFNSTQIKAGSTANSNSTP. In terms of domain architecture, RRM spans 202-280; the sequence is TAIVVKNIPF…RRLRVEWKRQ (79 aa). 3 positions are modified to phosphoserine: Ser-397, Ser-401, and Ser-427. A Phosphothreonine modification is found at Thr-431. 3 positions are modified to phosphoserine: Ser-435, Ser-456, and Ser-466. A disordered region spans residues 457–490; sequence PLQKASTLSSPFNSKNDNDASTSASKQSFGVSHF.

As to quaternary structure, interacts with csx1. Phosphorylated by sty1.

The protein localises to the cytoplasm. Functionally, regulates global gene expression after oxidative stress. Interacts and stabilizes mRNAs and may regulate their transition between different cytoplasmic components after oxidative stress. The protein is RNA-binding post-transcriptional regulator cip1 (cip1) of Schizosaccharomyces pombe (strain 972 / ATCC 24843) (Fission yeast).